A 444-amino-acid chain; its full sequence is C4-dicarboxylate transport protein (444 aa).

8 consecutive transmembrane segments (helical) span residues 7 to 29, 44 to 66, 79 to 101, 143 to 165, 186 to 208, 221 to 243, 291 to 313, and 353 to 375; these read LYKS…GHFY, IKLI…IAGM, ALLY…VNVV, IVGA…FGFA, VMFN…AMAF, LGQL…LGAI, VVGL…YLTM, and FIVL…ALIL. Positions 418-444 are disordered; sequence SGGRAISDTREEDDLGVAEGPTPTTVK.

The protein belongs to the dicarboxylate/amino acid:cation symporter (DAACS) (TC 2.A.23) family.

It localises to the cell inner membrane. In terms of biological role, responsible for the transport of dicarboxylates such as succinate, fumarate, and malate from the periplasm across the inner membrane. The sequence is that of C4-dicarboxylate transport protein from Pseudomonas chlororaphis (Pseudomonas aureofaciens).